The primary structure comprises 197 residues: Elongation factor Ts (197 aa).

An involved in Mg(2+) ion dislocation from EF-Tu region spans residues 81–84; that stretch reads TDFV.

The protein belongs to the EF-Ts family.

The protein resides in the cytoplasm. In terms of biological role, associates with the EF-Tu.GDP complex and induces the exchange of GDP to GTP. It remains bound to the aminoacyl-tRNA.EF-Tu.GTP complex up to the GTP hydrolysis stage on the ribosome. The protein is Elongation factor Ts of Fervidobacterium nodosum (strain ATCC 35602 / DSM 5306 / Rt17-B1).